Consider the following 388-residue polypeptide: Processive diacylglycerol beta-glucosyltransferase (388 aa).

The protein belongs to the glycosyltransferase 28 family. UgtP subfamily.

It is found in the cell membrane. It catalyses the reaction a 1,2-diacyl-3-O-(beta-D-glucopyranosyl)-sn-glycerol + UDP-alpha-D-glucose = a 1,2-diacyl-3-O-(beta-D-Glc-(1-&gt;6)-beta-D-Glc)-sn-glycerol + UDP + H(+). It carries out the reaction a 1,2-diacyl-3-O-(beta-D-Glc-(1-&gt;6)-beta-D-Glc)-sn-glycerol + UDP-alpha-D-glucose = a 1,2-diacyl-3-O-(beta-D-Glc-(1-&gt;6)-beta-D-Glc-(1-&gt;6)-beta-D-Glc)-sn-glycerol + UDP + H(+). The catalysed reaction is a 1,2-diacyl-sn-glycerol + UDP-alpha-D-glucose = a 1,2-diacyl-3-O-(beta-D-glucopyranosyl)-sn-glycerol + UDP + H(+). It participates in glycolipid metabolism; diglucosyl-diacylglycerol biosynthesis. Processive glucosyltransferase involved in the biosynthesis of both the bilayer- and non-bilayer-forming membrane glucolipids. Is able to successively transfer up to three glucosyl residues to diacylglycerol (DAG), thereby catalyzing the formation of beta-monoglucosyl-DAG (3-O-(beta-D-glucopyranosyl)-1,2-diacyl-sn-glycerol), beta-diglucosyl-DAG (3-O-(beta-D-glucopyranosyl-beta-(1-&gt;6)-D-glucopyranosyl)-1,2-diacyl-sn-glycerol) and beta-triglucosyl-DAG (3-O-(beta-D-glucopyranosyl-beta-(1-&gt;6)-D-glucopyranosyl-beta-(1-&gt;6)-D-glucopyranosyl)-1,2-diacyl-sn-glycerol). Beta-diglucosyl-DAG is the predominant glycolipid found in Bacillales and is also used as a membrane anchor for lipoteichoic acid (LTA). The polypeptide is Processive diacylglycerol beta-glucosyltransferase (Bacillus cytotoxicus (strain DSM 22905 / CIP 110041 / 391-98 / NVH 391-98)).